Reading from the N-terminus, the 426-residue chain is Histidine--tRNA ligase (426 aa).

The protein belongs to the class-II aminoacyl-tRNA synthetase family. As to quaternary structure, homodimer.

It localises to the cytoplasm. The enzyme catalyses tRNA(His) + L-histidine + ATP = L-histidyl-tRNA(His) + AMP + diphosphate + H(+). This is Histidine--tRNA ligase from Streptococcus thermophilus (strain CNRZ 1066).